Reading from the N-terminus, the 505-residue chain is Hexose transporter 1 (505 aa).

Over 1–27 (MNILRMDILSRGGTQEIEHRDGFFNTS) the chain is Cytoplasmic. A helical membrane pass occupies residues 28 to 48 (FQYVLSACLASFIFGYQVSVL). The Extracellular portion of the chain corresponds to 49 to 78 (NTIKSYIVVEFEWCSTKTDTSCEDSILKSS). Cys62 and Cys70 are disulfide-bonded. Residues 79 to 99 (FLLASVFIGAVLGSGFSGYLV) traverse the membrane as a helical segment. Over 100-104 (KFGRR) the chain is Cytoplasmic. The chain crosses the membrane as a helical span at residues 105 to 125 (FSLMVIYIFFIFVSILTAISH). Residues 126–134 (HFHTILYAR) are Extracellular-facing. Residues 135–155 (LLSGFGIGLITVSVPMYISEM) traverse the membrane as a helical segment. Residues 156-165 (THKDKKGAYG) lie on the Cytoplasmic side of the membrane. The chain crosses the membrane as a helical span at residues 166–186 (VLHQLFITFGIFVAVLLGLFL). An alpha-D-glucose-binding site is contributed by Gln169. Gln169 provides a ligand contact to beta-D-glucose. Residues 187 to 208 (GDGPKINGKSIELSNFEMFWWR) lie on the Extracellular side of the membrane. The chain crosses the membrane as a helical span at residues 209 to 229 (FMFFLPTIISLLGIILLIAFY). The Cytoplasmic segment spans residues 230-294 (KEETPYFLYE…SALKIPAYRN (65 aa)). The helical transmembrane segment at 295 to 315 (VIILGCILSGFQQFTGINVLV) threads the bilayer. Positions 306, 307, and 312 each coordinate alpha-D-glucose. Gln306 is a binding site for beta-D-glucose. Asn312 serves as a coordination point for beta-D-glucose. Residues 316–332 (ANSNELYKEFLDKNLIT) are Extracellular-facing. Residues 333 to 353 (ILSVIMTAVNFLMTFPAIYII) traverse the membrane as a helical segment. Asn342 provides a ligand contact to beta-D-glucose. Residues 354-358 (EKIGR) lie on the Cytoplasmic side of the membrane. The helical transmembrane segment at 359–379 (KTLLLGGCIGVICAFLPTVIA) threads the bilayer. The Extracellular portion of the chain corresponds to 380-393 (RQVWGPTKIVNGLS). Residues 394-414 (IAGTFLMIISFAVSYGPVLWI) form a helical membrane-spanning segment. Trp413 lines the alpha-D-glucose pocket. Residues 415 to 430 (YLHEMYPSEIKDSAAS) lie on the Cytoplasmic side of the membrane. Residues 431 to 451 (LASLINWVCAIIVVFPSDIII) traverse the membrane as a helical segment. Topologically, residues 452–456 (KKSPS) are extracellular. The chain crosses the membrane as a helical span at residues 457–477 (ILFMFFSVMCIIAFLFIMFFI). The Cytoplasmic portion of the chain corresponds to 478–505 (KETKGGEIGTSPYISLEERQKHIGKSKV).

Belongs to the major facilitator superfamily. Sugar transporter (TC 2.A.1.1) family. As to quaternary structure, homodimer.

It is found in the cell membrane. The catalysed reaction is D-glucose(out) = D-glucose(in). The enzyme catalyses D-fructose(out) = D-fructose(in). It catalyses the reaction D-galactose(in) = D-galactose(out). It carries out the reaction D-mannose(out) = D-mannose(in). The catalysed reaction is D-glucosamine(out) = D-glucosamine(in). The enzyme catalyses D-xylose(out) = D-xylose(in). Inhibited by cytochalasin B. Sodium-independent facilitative hexose transporter. Can transport D-glucose and D-fructose. Can transport D-mannose, D-galactose, D-xylose and D-glucosamine. The protein is Hexose transporter 1 of Plasmodium yoelii yoelii.